The following is a 969-amino-acid chain: Poly(ADP-ribose) glycohydrolase (969 aa).

3 disordered regions span residues 1 to 149, 161 to 341, and 368 to 400; these read MSAG…QQQT, HAEQ…CQAR, and NNAG…GKRD. Residues 1–449 are A-domain; that stretch reads MSAGPGWEPC…LPPEKKWLGT (449 aa). The short motif at 10–16 is the Nuclear localization signal element; it reads CTKRPRW. Positions 69–84 are enriched in polar residues; it reads NATSFVFKQKTITTWM. The PIP-box (PCNA interacting peptide) motif lies at 77–84; the sequence is QKTITTWM. Basic and acidic residues predominate over residues 87-100; it reads KGPKTAESESKENN. A compositionally biased stretch (polar residues) spans 101–113; that stretch reads NTRIDSMMSSVQK. A compositionally biased stretch (basic and acidic residues) spans 116–125; that stretch reads FYPHKVEKLE. 2 stretches are compositionally biased toward polar residues: residues 128–149 and 179–189; these read PQLN…QQQT and QLSNANIGQSP. At Ser135 the chain carries Phosphoserine. Thr137 bears the Phosphothreonine mark. Positions 190-205 are enriched in basic and acidic residues; it reads HTDDHSDTDHEEDRDN. The residue at position 195 (Ser195) is a Phosphoserine. The residue at position 197 (Thr197) is a Phosphothreonine. The segment covering 226 to 237 has biased composition (polar residues); that stretch reads ARSNCKCSGSRQ. Residues Ser256, Ser259, Ser281, Ser286, Ser293, Ser297, and Ser311 each carry the phosphoserine modification. Positions 275-284 are enriched in polar residues; sequence KLTGQESSLG. The span at 311 to 325 shows a compositional bias: acidic residues; sequence SEADEETSPVFDEQD. 2 stretches are compositionally biased toward polar residues: residues 329 to 339 and 369 to 387; these read SQTANKLSSCQ and NAGT…SSLN. Lys334 carries the post-translational modification N6-acetyllysine. The interval 603 to 788 is catalytic; that stretch reads QPIPLLKQKM…TEQYSEYTGY (186 aa). Residue 719-720 participates in substrate binding; that stretch reads IE. Asp730 is an active-site residue. The substrate site is built by Asn733 and Gln747. Active-site residues include Glu748 and Glu749. Substrate contacts are provided by residues Tyr788 and 862–867; that span reads NWGCGA.

It belongs to the poly(ADP-ribose) glycohydrolase family. In terms of assembly, interacts with PCNA. Interacts with NUDT5.

The protein localises to the nucleus. It carries out the reaction [(1''-&gt;2')-ADP-alpha-D-ribose](n) + H2O = [(1''-&gt;2')-ADP-alpha-D-ribose](n-1) + ADP-D-ribose. Poly(ADP-ribose) glycohydrolase that degrades poly(ADP-ribose) by hydrolyzing the ribose-ribose bonds present in poly(ADP-ribose). PARG acts both as an endo- and exoglycosidase, releasing poly(ADP-ribose) of different length as well as ADP-ribose monomers. It is however unable to cleave the ester bond between the terminal ADP-ribose and ADP-ribosylated residues, leaving proteins that are mono-ADP-ribosylated. Poly(ADP-ribose) is synthesized after DNA damage is only present transiently and is rapidly degraded by PARG. Required to prevent detrimental accumulation of poly(ADP-ribose) upon prolonged replicative stress, while it is not required for recovery from transient replicative stress. Responsible for the prevalence of mono-ADP-ribosylated proteins in cells, thanks to its ability to degrade poly(ADP-ribose) without cleaving the terminal protein-ribose bond. Required for retinoid acid-dependent gene transactivation, probably by removing poly(ADP-ribose) from histone demethylase KDM4D, allowing chromatin derepression at RAR-dependent gene promoters. Involved in the synthesis of ATP in the nucleus, together with PARP1, NMNAT1 and NUDT5. Nuclear ATP generation is required for extensive chromatin remodeling events that are energy-consuming. This Mus musculus (Mouse) protein is Poly(ADP-ribose) glycohydrolase.